The primary structure comprises 138 residues: Probable lactoylglutathione lyase (138 aa).

Residues 5–129 form the VOC domain; it reads RILHTMLRVG…DGYMIELIQN (125 aa). His-8 provides a ligand contact to Ni(2+). Substrate is bound at residue Arg-12. Glu-59 provides a ligand contact to Ni(2+). 2 residues coordinate substrate: Asn-63 and His-77. 2 residues coordinate Ni(2+): His-77 and Glu-125. Catalysis depends on Glu-125, which acts as the Proton donor/acceptor.

Belongs to the glyoxalase I family. Ni(2+) serves as cofactor.

It carries out the reaction (R)-S-lactoylglutathione = methylglyoxal + glutathione. It participates in secondary metabolite metabolism; methylglyoxal degradation; (R)-lactate from methylglyoxal: step 1/2. Its function is as follows. Catalyzes the conversion of hemimercaptal, formed from methylglyoxal and glutathione, to S-lactoylglutathione. In Vibrio parahaemolyticus serotype O3:K6 (strain RIMD 2210633), this protein is Probable lactoylglutathione lyase (gloA).